The primary structure comprises 233 residues: 7-cyano-7-deazaguanine synthase (233 aa).

13-23 (LSGGLDSTTCL) serves as a coordination point for ATP. Positions 197, 206, 209, and 212 each coordinate Zn(2+).

The protein belongs to the QueC family. It depends on Zn(2+) as a cofactor.

It carries out the reaction 7-carboxy-7-deazaguanine + NH4(+) + ATP = 7-cyano-7-deazaguanine + ADP + phosphate + H2O + H(+). The protein operates within purine metabolism; 7-cyano-7-deazaguanine biosynthesis. Its function is as follows. Catalyzes the ATP-dependent conversion of 7-carboxy-7-deazaguanine (CDG) to 7-cyano-7-deazaguanine (preQ(0)). The sequence is that of 7-cyano-7-deazaguanine synthase from Anaeromyxobacter sp. (strain Fw109-5).